Here is a 115-residue protein sequence, read N- to C-terminus: Large ribosomal subunit protein bL19 (115 aa).

This sequence belongs to the bacterial ribosomal protein bL19 family.

Functionally, this protein is located at the 30S-50S ribosomal subunit interface and may play a role in the structure and function of the aminoacyl-tRNA binding site. The polypeptide is Large ribosomal subunit protein bL19 (Thermosipho melanesiensis (strain DSM 12029 / CIP 104789 / BI429)).